The sequence spans 214 residues: MRLRKKWWARPELEASPIFKSLDEARELKGNWKDEFKNNNDIYLELGCGRGGFAVQAASKFNDKNLISIDLKDEVLVYALKNIVDAELENVRLVAMNIGMIAEIFDENEISRIYINFCNPWPKDRHNKRRLTHTRFLTEYKKFIKPGTEIHFKTDDLDLFNDSLVYFEESGFELLYKTYDLHNSDYADENLMTEYETKFKEKGIKSKFLIAKLK.

Glu45, Asp70, Asn97, and Asn119 together coordinate S-adenosyl-L-methionine. Lys123 is a substrate binding site. An interaction with RNA region spans residues 125–130 (RHNKRR). Substrate is bound by residues Asp155 and 193 to 196 (TEYE).

The protein belongs to the class I-like SAM-binding methyltransferase superfamily. TrmB family.

It catalyses the reaction guanosine(46) in tRNA + S-adenosyl-L-methionine = N(7)-methylguanosine(46) in tRNA + S-adenosyl-L-homocysteine. The protein operates within tRNA modification; N(7)-methylguanine-tRNA biosynthesis. Catalyzes the formation of N(7)-methylguanine at position 46 (m7G46) in tRNA. The polypeptide is tRNA (guanine-N(7)-)-methyltransferase (Clostridium novyi (strain NT)).